A 434-amino-acid chain; its full sequence is Serine hydroxymethyltransferase (434 aa).

Residues leucine 133 and 137-139 (GHL) each bind (6S)-5,6,7,8-tetrahydrofolate. Position 242 is an N6-(pyridoxal phosphate)lysine (lysine 242). Residue 366–368 (SPF) participates in (6S)-5,6,7,8-tetrahydrofolate binding.

It belongs to the SHMT family. In terms of assembly, homodimer. It depends on pyridoxal 5'-phosphate as a cofactor.

Its subcellular location is the cytoplasm. It carries out the reaction (6R)-5,10-methylene-5,6,7,8-tetrahydrofolate + glycine + H2O = (6S)-5,6,7,8-tetrahydrofolate + L-serine. The protein operates within one-carbon metabolism; tetrahydrofolate interconversion. It participates in amino-acid biosynthesis; glycine biosynthesis; glycine from L-serine: step 1/1. In terms of biological role, catalyzes the reversible interconversion of serine and glycine with tetrahydrofolate (THF) serving as the one-carbon carrier. This reaction serves as the major source of one-carbon groups required for the biosynthesis of purines, thymidylate, methionine, and other important biomolecules. Also exhibits THF-independent aldolase activity toward beta-hydroxyamino acids, producing glycine and aldehydes, via a retro-aldol mechanism. This chain is Serine hydroxymethyltransferase, found in Erythrobacter litoralis (strain HTCC2594).